The sequence spans 162 residues: Large ribosomal subunit protein uL30 (162 aa).

This sequence belongs to the universal ribosomal protein uL30 family. Part of the 50S ribosomal subunit.

The chain is Large ribosomal subunit protein uL30 from Desulfurococcus amylolyticus (strain DSM 18924 / JCM 16383 / VKM B-2413 / 1221n) (Desulfurococcus kamchatkensis).